A 234-amino-acid polypeptide reads, in one-letter code: Large ribosomal subunit protein uL1 (234 aa).

This sequence belongs to the universal ribosomal protein uL1 family. In terms of assembly, part of the 50S ribosomal subunit.

In terms of biological role, binds directly to 23S rRNA. The L1 stalk is quite mobile in the ribosome, and is involved in E site tRNA release. Its function is as follows. Protein L1 is also a translational repressor protein, it controls the translation of the L11 operon by binding to its mRNA. In Serratia marcescens, this protein is Large ribosomal subunit protein uL1.